Consider the following 224-residue polypeptide: uncharacterized protein (224 aa).

A signal peptide spans 1-16 (MKILYSFLLLPFFSCA).

This is an uncharacterized protein from Escherichia coli.